We begin with the raw amino-acid sequence, 152 residues long: Small ribosomal subunit protein uS8m (152 aa).

The protein belongs to the universal ribosomal protein uS8 family. In terms of assembly, component of the mitochondrial small ribosomal subunit (mt-SSU). Mature yeast 74S mitochondrial ribosomes consist of a small (37S) and a large (54S) subunit. The 37S small subunit contains a 15S ribosomal RNA (15S mt-rRNA) and at least 32 different proteins. The 54S large subunit contains a 21S rRNA (21S mt-rRNA) and at least 45 different proteins.

Its subcellular location is the mitochondrion. In terms of biological role, component of the mitochondrial ribosome (mitoribosome), a dedicated translation machinery responsible for the synthesis of mitochondrial genome-encoded proteins, including at least some of the essential transmembrane subunits of the mitochondrial respiratory chain. The mitoribosomes are attached to the mitochondrial inner membrane and translation products are cotranslationally integrated into the membrane. This is Small ribosomal subunit protein uS8m (mrps8) from Schizosaccharomyces pombe (strain 972 / ATCC 24843) (Fission yeast).